The primary structure comprises 216 residues: Ribosomal RNA small subunit methyltransferase G (216 aa).

S-adenosyl-L-methionine contacts are provided by residues glycine 83, methionine 88, 134-135 (VE), and arginine 149.

Belongs to the methyltransferase superfamily. RNA methyltransferase RsmG family.

It is found in the cytoplasm. It catalyses the reaction guanosine(527) in 16S rRNA + S-adenosyl-L-methionine = N(7)-methylguanosine(527) in 16S rRNA + S-adenosyl-L-homocysteine. In terms of biological role, specifically methylates the N7 position of guanine in position 527 of 16S rRNA. In Pseudomonas putida (strain ATCC 700007 / DSM 6899 / JCM 31910 / BCRC 17059 / LMG 24140 / F1), this protein is Ribosomal RNA small subunit methyltransferase G.